We begin with the raw amino-acid sequence, 126 residues long: Histone H2B type 1-B (126 aa).

Positions 1–12 (MPEPSKSAPAPK) are enriched in low complexity. The interval 1-36 (MPEPSKSAPAPKKGSKKAISKAQKKDGKKRKRSRKE) is disordered. The residue at position 2 (Pro-2) is an N-acetylproline. ADP-ribosyl glutamic acid is present on Glu-3. N6-(2-hydroxyisobutyryl)lysine; alternate is present on Lys-6. N6-(beta-hydroxybutyryl)lysine; alternate is present on Lys-6. Residue Lys-6 is modified to N6-acetyllysine; alternate. Lys-6 is modified (N6-butyryllysine; alternate). Lys-6 carries the N6-crotonyllysine; alternate modification. Lys-6 is modified (N6-lactoyllysine; alternate). Lys-6 is covalently cross-linked (Glycyl lysine isopeptide (Lys-Gly) (interchain with G-Cter in SUMO2); alternate). Ser-7 is modified (ADP-ribosylserine). Lys-12 is subject to N6-(beta-hydroxybutyryl)lysine; alternate. An N6-acetyllysine; alternate mark is found at Lys-12 and Lys-13. 2 positions are modified to N6-crotonyllysine; alternate: Lys-12 and Lys-13. An N6-lactoyllysine; alternate modification is found at Lys-12. N6-(2-hydroxyisobutyryl)lysine; alternate is present on Lys-13. Position 15 is a phosphoserine; by STK4/MST1 (Ser-15). An N6-acetyllysine; alternate mark is found at Lys-16, Lys-17, Lys-21, and Lys-24. N6-crotonyllysine; alternate is present on residues Lys-16, Lys-17, Lys-21, and Lys-24. N6-lactoyllysine; alternate occurs at positions 16, 17, 21, and 24. Lys-17 is modified (N6-glutaryllysine; alternate). N6-(2-hydroxyisobutyryl)lysine; alternate occurs at positions 21 and 24. Lys-21 bears the N6-(beta-hydroxybutyryl)lysine; alternate mark. An N6-butyryllysine; alternate modification is found at Lys-21. Residue Lys-21 forms a Glycyl lysine isopeptide (Lys-Gly) (interchain with G-Cter in SUMO2); alternate linkage. N6-(2-hydroxyisobutyryl)lysine is present on Lys-25. Lys-35 carries the N6-(2-hydroxyisobutyryl)lysine; alternate modification. At Lys-35 the chain carries N6-(beta-hydroxybutyryl)lysine; alternate. An N6-crotonyllysine; alternate modification is found at Lys-35. Lys-35 is subject to N6-glutaryllysine; alternate. At Lys-35 the chain carries N6-succinyllysine; alternate. A Glycyl lysine isopeptide (Lys-Gly) (interchain with G-Cter in ubiquitin); alternate cross-link involves residue Lys-35. Glu-36 is modified (polyADP-ribosyl glutamic acid). Position 37 is a phosphoserine; by AMPK (Ser-37). N6-(2-hydroxyisobutyryl)lysine; alternate occurs at positions 44, 47, and 58. Lys-44 is modified (N6-lactoyllysine; alternate). Lys-44 and Lys-47 each carry N6-glutaryllysine; alternate. The residue at position 47 (Lys-47) is an N6-methyllysine; alternate. Lys-58 bears the N6,N6-dimethyllysine; alternate mark. At Arg-80 the chain carries Dimethylated arginine. At Lys-86 the chain carries N6-(2-hydroxyisobutyryl)lysine; alternate. Lys-86 bears the N6-acetyllysine; alternate mark. Position 86 is an N6-lactoyllysine; alternate (Lys-86). Lys-86 bears the N6,N6,N6-trimethyllysine; alternate mark. Omega-N-methylarginine is present on residues Arg-87 and Arg-93. Lys-109 is subject to N6-(2-hydroxyisobutyryl)lysine; alternate. An N6-(beta-hydroxybutyryl)lysine; alternate modification is found at Lys-109. At Lys-109 the chain carries N6-lactoyllysine; alternate. Lys-109 bears the N6-glutaryllysine; alternate mark. Position 109 is an N6-methyllysine; alternate (Lys-109). The O-linked (GlcNAc) serine glycan is linked to Ser-113. Phosphothreonine is present on Thr-116. N6-(2-hydroxyisobutyryl)lysine; alternate is present on residues Lys-117 and Lys-121. Residue Lys-117 is modified to N6-(beta-hydroxybutyryl)lysine; alternate. Residues Lys-117 and Lys-121 each carry the N6-lactoyllysine; alternate modification. Lys-117 and Lys-121 each carry N6-glutaryllysine; alternate. An N6-succinyllysine; alternate mark is found at Lys-117 and Lys-121. Residue Lys-117 is modified to N6-methylated lysine; alternate. Lys-121 is covalently cross-linked (Glycyl lysine isopeptide (Lys-Gly) (interchain with G-Cter in ubiquitin); alternate).

This sequence belongs to the histone H2B family. In terms of assembly, the nucleosome is a histone octamer containing two molecules each of H2A, H2B, H3 and H4 assembled in one H3-H4 heterotetramer and two H2A-H2B heterodimers. The octamer wraps approximately 147 bp of DNA. In terms of processing, monoubiquitination at Lys-35 (H2BK34Ub) by the MSL1/MSL2 dimer is required for histone H3 'Lys-4' (H3K4me) and 'Lys-79' (H3K79me) methylation and transcription activation at specific gene loci, such as HOXA9 and MEIS1 loci. Similarly, monoubiquitination at Lys-121 (H2BK120Ub) by the RNF20/40 complex gives a specific tag for epigenetic transcriptional activation and is also prerequisite for histone H3 'Lys-4' and 'Lys-79' methylation. It also functions cooperatively with the FACT dimer to stimulate elongation by RNA polymerase II. H2BK120Ub also acts as a regulator of mRNA splicing: deubiquitination by USP49 is required for efficient cotranscriptional splicing of a large set of exons. Phosphorylated on Ser-15 (H2BS14ph) by STK4/MST1 during apoptosis; which facilitates apoptotic chromatin condensation. Also phosphorylated on Ser-15 in response to DNA double strand breaks (DSBs), and in correlation with somatic hypermutation and immunoglobulin class-switch recombination. Phosphorylation at Ser-37 (H2BS36ph) by AMPK in response to stress promotes transcription. Post-translationally, glcNAcylation at Ser-113 promotes monoubiquitination of Lys-121. It fluctuates in response to extracellular glucose, and associates with transcribed genes. In terms of processing, ADP-ribosylated by PARP1 or PARP2 on Ser-7 (H2BS6ADPr) in response to DNA damage. H2BS6ADPr promotes recruitment of CHD1L. Mono-ADP-ribosylated on Glu-3 (H2BE2ADPr) by PARP3 in response to single-strand breaks. Poly ADP-ribosylation on Glu-36 (H2BE35ADPr) by PARP1 regulates adipogenesis: it inhibits phosphorylation at Ser-37 (H2BS36ph), thereby blocking expression of pro-adipogenetic genes. Hydroxybutyrylation of histones is induced by starvation. Post-translationally, crotonylation (Kcr) is specifically present in male germ cells and marks testis-specific genes in post-meiotic cells, including X-linked genes that escape sex chromosome inactivation in haploid cells. Crotonylation marks active promoters and enhancers and confers resistance to transcriptional repressors. It is also associated with post-meiotically activated genes on autosomes. In terms of processing, lactylated in macrophages by EP300/P300 by using lactoyl-CoA directly derived from endogenous or exogenous lactate, leading to stimulates gene transcription.

It localises to the nucleus. Its subcellular location is the chromosome. Core component of nucleosome. Nucleosomes wrap and compact DNA into chromatin, limiting DNA accessibility to the cellular machineries which require DNA as a template. Histones thereby play a central role in transcription regulation, DNA repair, DNA replication and chromosomal stability. DNA accessibility is regulated via a complex set of post-translational modifications of histones, also called histone code, and nucleosome remodeling. The protein is Histone H2B type 1-B of Mus musculus (Mouse).